Reading from the N-terminus, the 616-residue chain is GDP-Man:Man(3)GlcNAc(2)-PP-Dol alpha-1,2-mannosyltransferase (616 aa).

A topological domain (lumenal) is located at residue Met-1. The helical transmembrane segment at 2–21 (GYLVVIGVIACVAYGILQVV) threads the bilayer. Residues 22–199 (STVLPRLLLV…RLIDGDYWKR (178 aa)) are Cytoplasmic-facing. The helical intramembrane region spans 200–220 (FTLIGQLFGSMVLSWEAMFEL). Residues 221–460 (SPDVWIDTIG…FGLNAMWNEH (240 aa)) lie on the Cytoplasmic side of the membrane. The helical intramembrane region spans 461-481 (FGIGVVEYMSRGVIPLCHASA). Residues 482-616 (GPLLDIVTNW…ERRSGIEKVY (135 aa)) lie on the Cytoplasmic side of the membrane.

It belongs to the glycosyltransferase group 1 family.

It localises to the endoplasmic reticulum membrane. The catalysed reaction is an alpha-D-Man-(1-&gt;3)-[alpha-D-Man-(1-&gt;6)]-beta-D-Man-(1-&gt;4)-beta-D-GlcNAc-(1-&gt;4)-alpha-D-GlcNAc-diphospho-di-trans,poly-cis-dolichol + 2 GDP-alpha-D-mannose = an alpha-D-Man-(1-&gt;2)-alpha-D-Man-(1-&gt;2)-alpha-D-Man-(1-&gt;3)-[alpha-D-Man-(1-&gt;6)]-beta-D-Man-(1-&gt;4)-beta-D-GlcNAc-(1-&gt;4)-alpha-D-GlcNAc-diphospho-di-trans,poly-cis-dolichol + 2 GDP + 2 H(+). Its pathway is protein modification; protein glycosylation. Its function is as follows. GDP-Man:Man(3)GlcNAc(2)-PP-Dol alpha-1,2-mannosyltransferase that operates in the biosynthetic pathway of dolichol-linked oligosaccharides, the glycan precursors employed in protein asparagine (N)-glycosylation. The assembly of dolichol-linked oligosaccharides begins on the cytosolic side of the endoplasmic reticulum membrane and finishes in its lumen. The sequential addition of sugars to dolichol pyrophosphate produces dolichol-linked oligosaccharides containing fourteen sugars, including two GlcNAcs, nine mannoses and three glucoses. Once assembled, the oligosaccharide is transferred from the lipid to nascent proteins by oligosaccharyltransferases. Catalyzes, on the cytoplasmic face of the endoplasmic reticulum, the addition of the fourth and fifth mannose residues to the dolichol-linked oligosaccharide chain, to produce Man(5)GlcNAc(2)-PP-dolichol core oligosaccharide. The sequence is that of GDP-Man:Man(3)GlcNAc(2)-PP-Dol alpha-1,2-mannosyltransferase (ALG11) from Debaryomyces hansenii (strain ATCC 36239 / CBS 767 / BCRC 21394 / JCM 1990 / NBRC 0083 / IGC 2968) (Yeast).